Consider the following 448-residue polypeptide: Ribosome biogenesis protein YTM1 (448 aa).

Residues 5–86 (TSNQAVVFST…EETLEIEYIE (82 aa)) form a ubiquitin-like (UBL) domain region. 6 WD repeats span residues 98 to 136 (PHES…TLDA), 191 to 230 (LHTA…KHEV), 271 to 309 (SHIG…CTRT), 312 to 351 (ASEK…ALSA), 357 to 397 (LHPA…AAIS), and 403 to 439 (DGTK…ETQG). Residues 225–261 (PPKHEVPEPTITAADQRTKKRRKVDPSSGDSSSPTAI) form a disordered region.

This sequence belongs to the WD repeat WDR12/YTM1 family. Component of the NOP7 complex, composed of ERB1, NOP7 and YTM1. The complex is held together by ERB1, which interacts with NOP7 via its N-terminal domain and with YTM1 via a high-affinity interaction between the seven-bladed beta-propeller domains of the 2 proteins. The NOP7 complex associates with the 66S pre-ribosome. Interacts (via UBL domain) with MDN1 (via VWFA/MIDAS domain).

The protein localises to the nucleus. The protein resides in the nucleolus. It is found in the nucleoplasm. In terms of biological role, component of the NOP7 complex, which is required for maturation of the 25S and 5.8S ribosomal RNAs and formation of the 60S ribosome. This is Ribosome biogenesis protein YTM1 from Coprinopsis cinerea (strain Okayama-7 / 130 / ATCC MYA-4618 / FGSC 9003) (Inky cap fungus).